The following is a 276-amino-acid chain: Undecaprenyl-diphosphatase 2 (276 aa).

8 helical membrane-spanning segments follow: residues M1–V21, Q44–F64, G87–L107, V114–L134, M150–F170, A190–L210, D222–M242, and L251–L271.

It belongs to the UppP family.

The protein resides in the cell inner membrane. The enzyme catalyses di-trans,octa-cis-undecaprenyl diphosphate + H2O = di-trans,octa-cis-undecaprenyl phosphate + phosphate + H(+). Catalyzes the dephosphorylation of undecaprenyl diphosphate (UPP). Confers resistance to bacitracin. In Burkholderia lata (strain ATCC 17760 / DSM 23089 / LMG 22485 / NCIMB 9086 / R18194 / 383), this protein is Undecaprenyl-diphosphatase 2.